Here is a 586-residue protein sequence, read N- to C-terminus: Asparagine synthetase, nodule [glutamine-hydrolyzing] (586 aa).

C2 functions as the For GATase activity in the catalytic mechanism. The Glutamine amidotransferase type-2 domain occupies 2–185; that stretch reads CGILAVLGCS…PGHLYSSKER (184 aa). Residues 50–54, 75–77, and D98 contribute to the L-glutamine site; these read RLAIV and NGE. Positions 193-517 constitute an Asparagine synthetase domain; the sequence is PPWFNEAIIP…PQNSARLTVP (325 aa). ATP contacts are provided by residues L232, V268, and 342-343; that span reads SG.

As to expression, root nodules.

The enzyme catalyses L-aspartate + L-glutamine + ATP + H2O = L-asparagine + L-glutamate + AMP + diphosphate + H(+). It participates in amino-acid biosynthesis; L-asparagine biosynthesis; L-asparagine from L-aspartate (L-Gln route): step 1/1. This is Asparagine synthetase, nodule [glutamine-hydrolyzing] (AS1) from Pisum sativum (Garden pea).